The following is a 444-amino-acid chain: Exodeoxyribonuclease 7 large subunit (444 aa).

The protein belongs to the XseA family. As to quaternary structure, heterooligomer composed of large and small subunits.

It localises to the cytoplasm. The enzyme catalyses Exonucleolytic cleavage in either 5'- to 3'- or 3'- to 5'-direction to yield nucleoside 5'-phosphates.. Functionally, bidirectionally degrades single-stranded DNA into large acid-insoluble oligonucleotides, which are then degraded further into small acid-soluble oligonucleotides. This is Exodeoxyribonuclease 7 large subunit from Xylella fastidiosa (strain 9a5c).